The sequence spans 235 residues: Homeobox protein Nkx-2.8 (235 aa).

The segment covering 51–67 (SDESGLETSPADSSQLA) has biased composition (polar residues). A disordered region spans residues 51-86 (SDESGLETSPADSSQLASLRRESPGSDPEKRRKRRV). Over residues 69-80 (LRRESPGSDPEK) the composition is skewed to basic and acidic residues. Residues 81–140 (RRKRRVLFSKAQTLELERRFRQQRYLSAPEREQLARLLRLTPTQVKIWFQNHRYKLKRGR) constitute a DNA-binding region (homeobox).

This sequence belongs to the NK-2 homeobox family. As to expression, prominent expression in ventral brain and neural tube structures.

The protein resides in the nucleus. Its function is as follows. Possible role in the specification of a distinct subset of neurons. In Mus musculus (Mouse), this protein is Homeobox protein Nkx-2.8 (Nkx2-8).